The following is a 190-amino-acid chain: Histone-arginine methyltransferase METTL23 (190 aa).

This sequence belongs to the methyltransferase superfamily. METTL23 family. Interacts with HSPA5, HSP90B1, TUBULIN, UGGT1 and UGGT2. Interacts with TET3. Interacts with STPG4.

It is found in the nucleus. Its subcellular location is the cytoplasm. It catalyses the reaction L-arginyl-[protein] + 2 S-adenosyl-L-methionine = N(omega),N(omega)-dimethyl-L-arginyl-[protein] + 2 S-adenosyl-L-homocysteine + 2 H(+). Its function is as follows. Histone methyltransferase that dimethylates histone H3 at 'Arg-17', forming asymmetric dimethylarginine (H3R17me2a), leading to activate transcription via chromatin remodeling. Maternal factor involved in epigenetic chromatin reprogramming of the paternal genome in the zygote: mediates H3R17me2a, promoting histone H3.3 incorporation in the male pronucleus, leading to TET3 recruitment and subsequent DNA demethylation. This is Histone-arginine methyltransferase METTL23 from Homo sapiens (Human).